We begin with the raw amino-acid sequence, 436 residues long: MAKKMKLSDITNMFAGMDVEALEGVTIEGDIEIDLGGLGGGFDPMLAAALGQESAILAQHFARLAGMFGYPVGIGAPAAPAVSPALAAPKLKDLIPAKFDVANIAEWATEIQEVPIGNTSADGGSRGKRVMLGGEKALPFYFDAPMPNRNQVTIDVFDMRIGLAKAVKENYDEVMDSPGEWAKKNVEKFNADMITIHLISTDPLIKDTPAKEAAKTVEEVLQAVDVPIAIGGSGNPQKDPEVLARAAEVSEGERCLLASASLNLDYAAIAEAALKYDHDVLSWTQLDMNAQKELNRKLMKQCNVPRDRIIMDPTTAALGYGLDYAYTNMERIRLAALMGDDELTFPMSSGTTNAWGARESWMVSSPLKEDSDWGPREYRGPIWEIVTGLSLAIAGNDLFMMMHPTSVAVLKQITQTLFGMIDTEQVDVANWIGAEV.

It belongs to the CdhD family. As to quaternary structure, heterodimer of delta and gamma chains. The ACDS complex is made up of alpha, epsilon, beta, gamma and delta chains with a probable stoichiometry of (alpha(2)epsilon(2))(4)-beta(8)-(gamma(1)delta(1))(8) (Potential).

The protein operates within one-carbon metabolism; methanogenesis from acetate. Functionally, part of a complex that catalyzes the reversible cleavage of acetyl-CoA, allowing growth on acetate as sole source of carbon and energy. Probably maintains the overall quaternary structure of the ACDS complex. This Methanosarcina acetivorans (strain ATCC 35395 / DSM 2834 / JCM 12185 / C2A) protein is Acetyl-CoA decarbonylase/synthase complex subunit delta 2 (cdhD2).